Consider the following 261-residue polypeptide: 4-hydroxy-tetrahydrodipicolinate reductase (261 aa).

NAD(+)-binding positions include 11-16 (GFMGAM), 96-98 (GTT), and 122-125 (APNF). His-152 serves as the catalytic Proton donor/acceptor. His-153 is a (S)-2,3,4,5-tetrahydrodipicolinate binding site. Lys-156 acts as the Proton donor in catalysis. 162 to 163 (GT) lines the (S)-2,3,4,5-tetrahydrodipicolinate pocket.

This sequence belongs to the DapB family.

The protein resides in the cytoplasm. The catalysed reaction is (S)-2,3,4,5-tetrahydrodipicolinate + NAD(+) + H2O = (2S,4S)-4-hydroxy-2,3,4,5-tetrahydrodipicolinate + NADH + H(+). It catalyses the reaction (S)-2,3,4,5-tetrahydrodipicolinate + NADP(+) + H2O = (2S,4S)-4-hydroxy-2,3,4,5-tetrahydrodipicolinate + NADPH + H(+). The protein operates within amino-acid biosynthesis; L-lysine biosynthesis via DAP pathway; (S)-tetrahydrodipicolinate from L-aspartate: step 4/4. In terms of biological role, catalyzes the conversion of 4-hydroxy-tetrahydrodipicolinate (HTPA) to tetrahydrodipicolinate. The protein is 4-hydroxy-tetrahydrodipicolinate reductase of Lactobacillus helveticus (strain DPC 4571).